The sequence spans 308 residues: Serpentine receptor class V-1 (308 aa).

A run of 7 helical transmembrane segments spans residues 15 to 35, 46 to 68, 88 to 108, 135 to 155, 184 to 204, 222 to 242, and 256 to 276; these read VSTA…YILF, PFFR…STFF, VVPI…IIFI, LLLI…STDF, AMVD…AIFI, LALS…CSLL, and TMWF…LLAL.

This sequence belongs to the nematode receptor-like protein srv family.

It is found in the membrane. The protein is Serpentine receptor class V-1 (srv-1) of Caenorhabditis elegans.